Here is a 307-residue protein sequence, read N- to C-terminus: Elongation factor Ts (307 aa).

The tract at residues 80 to 83 (TDFV) is involved in Mg(2+) ion dislocation from EF-Tu.

Belongs to the EF-Ts family.

The protein resides in the cytoplasm. In terms of biological role, associates with the EF-Tu.GDP complex and induces the exchange of GDP to GTP. It remains bound to the aminoacyl-tRNA.EF-Tu.GTP complex up to the GTP hydrolysis stage on the ribosome. In Methylobacterium sp. (strain 4-46), this protein is Elongation factor Ts.